We begin with the raw amino-acid sequence, 558 residues long: Glucose-6-phosphate isomerase (558 aa).

At Ala-2 the chain carries N-acetylalanine. Lys-12 carries the post-translational modification N6-acetyllysine. An N6-(2-hydroxyisobutyryl)lysine modification is found at Lys-34. Ser-107 carries the phosphoserine modification. Thr-109 bears the Phosphothreonine mark. Lys-142 carries the N6-acetyllysine modification. 159-160 (GS) is a D-glucose 6-phosphate binding site. Ser-185 is modified (phosphoserine; by CK2). D-glucose 6-phosphate is bound at residue 210–215 (SKTFTT). Thr-250 bears the Phosphothreonine mark. Residues Gln-354, Glu-358, and His-389 each contribute to the D-glucose 6-phosphate site. Catalysis depends on Glu-358, which acts as the Proton donor. Residue His-389 is part of the active site. Lys-454 is subject to N6-acetyllysine; alternate. The residue at position 454 (Lys-454) is an N6-malonyllysine; alternate. An N6-succinyllysine; alternate modification is found at Lys-454. Ser-455 carries the post-translational modification Phosphoserine. Lys-519 contributes to the D-glucose 6-phosphate binding site. The active site involves Lys-519.

This sequence belongs to the GPI family. Homodimer; in the catalytically active form. Monomer in the secreted form. Phosphorylation at Ser-185 by CK2 has been shown to decrease enzymatic activity and may contribute to secretion by a non-classical secretory pathway. In terms of processing, ISGylated.

Its subcellular location is the cytoplasm. It localises to the secreted. It carries out the reaction alpha-D-glucose 6-phosphate = beta-D-fructose 6-phosphate. It functions in the pathway carbohydrate degradation; glycolysis; D-glyceraldehyde 3-phosphate and glycerone phosphate from D-glucose: step 2/4. With respect to regulation, strongly inhibited by erythrose 4-phosphate. Its function is as follows. In the cytoplasm, catalyzes the conversion of glucose-6-phosphate to fructose-6-phosphate, the second step in glycolysis, and the reverse reaction during gluconeogenesis. Besides it's role as a glycolytic enzyme, also acts as a secreted cytokine: acts as an angiogenic factor (AMF) that stimulates endothelial cell motility. Acts as a neurotrophic factor, neuroleukin, for spinal and sensory neurons. It is secreted by lectin-stimulated T-cells and induces immunoglobulin secretion. In Homo sapiens (Human), this protein is Glucose-6-phosphate isomerase.